A 261-amino-acid chain; its full sequence is RING finger and CHY zinc finger domain-containing protein 1 (261 aa).

The CHY-type zinc finger occupies 13-80; sequence QERGQRGCEH…AQQTCEECST (68 aa). Residues Cys-20, His-22, Cys-33, Cys-34, Cys-40, Cys-43, His-44, His-50, Cys-62, Cys-65, Cys-75, Cys-78, Cys-87, Cys-90, His-101, Cys-102, Cys-105, Cys-108, His-118, Cys-119, Cys-122, Cys-125, His-134, and Cys-136 each contribute to the Zn(2+) site. Residues 82-144 form a CTCHY-type zinc finger; sequence FGEYYCDICH…KCIENVSRQN (63 aa). The RING-type zinc-finger motif lies at 145–189; the sequence is CPICLEDIHTSRVVAHVLPCGHLLHRTCYEEMLKEGYRCPLCMHS. Phosphoserine is present on Ser-257.

As to quaternary structure, monomer and homodimer. Interacts with AR, MDM2, KAT5, PLAG1, PLAGL2, COPE, UBE2D2 and GORAB/NTKLBP1. In terms of processing, subject to ubiquitination and proteasomal degradation. Interaction with PLAGL2 or KAT5 enhances protein stability.

Its subcellular location is the nucleus. The protein localises to the nucleus speckle. The protein resides in the cytoplasm. The catalysed reaction is S-ubiquitinyl-[E2 ubiquitin-conjugating enzyme]-L-cysteine + [acceptor protein]-L-lysine = [E2 ubiquitin-conjugating enzyme]-L-cysteine + N(6)-ubiquitinyl-[acceptor protein]-L-lysine.. It functions in the pathway protein modification; protein ubiquitination. E3 ubiquitin-protein ligase that mediates ubiquitination of target proteins, including p53/TP53, TP73, HDAC1 and CDKN1B. Mediates ubiquitination and degradation of p53/TP53; preferentially acts on tetrameric p53/TP53. Catalyzes monoubiquitinates the translesion DNA polymerase POLH. Involved in the ribosome-associated quality control (RQC) pathway, which mediates the extraction of incompletely synthesized nascent chains from stalled ribosomes: RCHY1 acts downstream of NEMF and recognizes CAT tails associated with stalled nascent chains, leading to their ubiquitination and degradation. Functionally, has no E3 ubiquitin-protein ligase activity. This Homo sapiens (Human) protein is RING finger and CHY zinc finger domain-containing protein 1 (RCHY1).